Here is a 461-residue protein sequence, read N- to C-terminus: Glycine--tRNA ligase (461 aa).

Arg100 and Glu174 together coordinate substrate. ATP contacts are provided by residues 206 to 208 (RNE), 216 to 221 (FRTREF), 290 to 291 (EL), and 334 to 337 (GVDR). Position 221–225 (221–225 (FEQME)) interacts with substrate. Residue 330–334 (EPSVG) participates in substrate binding.

It belongs to the class-II aminoacyl-tRNA synthetase family. In terms of assembly, homodimer.

It localises to the cytoplasm. The enzyme catalyses tRNA(Gly) + glycine + ATP = glycyl-tRNA(Gly) + AMP + diphosphate. In terms of biological role, catalyzes the attachment of glycine to tRNA(Gly). This is Glycine--tRNA ligase from Caldanaerobacter subterraneus subsp. tengcongensis (strain DSM 15242 / JCM 11007 / NBRC 100824 / MB4) (Thermoanaerobacter tengcongensis).